Consider the following 164-residue polypeptide: UPF0114 protein YqhA (164 aa).

3 helical membrane passes run 15–35 (LLAPVYFGLSLALIALALKFF), 53–73 (LILVLLSLVDMTLVGGLLVMV), and 136–156 (LMWYVIIHLTFVLSAFVMGYL).

The protein belongs to the UPF0114 family.

The protein localises to the cell membrane. The sequence is that of UPF0114 protein YqhA from Salmonella agona (strain SL483).